Consider the following 427-residue polypeptide: Enolase (427 aa).

Residue Gln-163 participates in (2R)-2-phosphoglycerate binding. Glu-205 acts as the Proton donor in catalysis. Mg(2+)-binding residues include Asp-242, Glu-285, and Asp-312. 4 residues coordinate (2R)-2-phosphoglycerate: Lys-337, Arg-366, Ser-367, and Lys-388. The Proton acceptor role is filled by Lys-337.

It belongs to the enolase family. Mg(2+) is required as a cofactor.

The protein localises to the cytoplasm. It is found in the secreted. It localises to the cell surface. The catalysed reaction is (2R)-2-phosphoglycerate = phosphoenolpyruvate + H2O. The protein operates within carbohydrate degradation; glycolysis; pyruvate from D-glyceraldehyde 3-phosphate: step 4/5. Catalyzes the reversible conversion of 2-phosphoglycerate (2-PG) into phosphoenolpyruvate (PEP). It is essential for the degradation of carbohydrates via glycolysis. In Ralstonia nicotianae (strain ATCC BAA-1114 / GMI1000) (Ralstonia solanacearum), this protein is Enolase.